Here is a 236-residue protein sequence, read N- to C-terminus: Purine nucleoside phosphorylase DeoD-type (236 aa).

His-4 provides a ligand contact to a purine D-ribonucleoside. Residues Gly-20, Arg-24, Arg-43, and 87 to 90 (RVGT) each bind phosphate. Residues 178 to 180 (EME) and 202 to 203 (SD) contribute to the a purine D-ribonucleoside site. Asp-203 (proton donor) is an active-site residue.

The protein belongs to the PNP/UDP phosphorylase family. In terms of assembly, homohexamer; trimer of homodimers.

It carries out the reaction a purine D-ribonucleoside + phosphate = a purine nucleobase + alpha-D-ribose 1-phosphate. The enzyme catalyses a purine 2'-deoxy-D-ribonucleoside + phosphate = a purine nucleobase + 2-deoxy-alpha-D-ribose 1-phosphate. Functionally, catalyzes the reversible phosphorolytic breakdown of the N-glycosidic bond in the beta-(deoxy)ribonucleoside molecules, with the formation of the corresponding free purine bases and pentose-1-phosphate. This is Purine nucleoside phosphorylase DeoD-type from Geobacillus kaustophilus (strain HTA426).